A 645-amino-acid polypeptide reads, in one-letter code: Developmental regulatory protein wetA (645 aa).

5 disordered regions span residues 158-187 (SLHS…RKPK), 201-249 (TNLR…VSPP), 284-376 (YYGQ…QMHW), 461-578 (AQTF…DGAS), and 596-618 (GVAP…DRRR). The segment covering 240 to 249 (TQGNLPVSPP) has biased composition (polar residues). Composition is skewed to basic residues over residues 315 to 326 (QHHHHPHHHHQQ) and 351 to 361 (QHQHQHHHQQQ). The segment covering 362-373 (QHHQQQQQQQHQ) has biased composition (low complexity). Polar residues predominate over residues 509-518 (GPSSSPTPAD). Low complexity predominate over residues 528–546 (SSGASVSSLRSSSGRLPAS). Positions 562–572 (ISGSNSATSLG) are enriched in polar residues.

It belongs to the wetA family.

Functionally, brlA, abaA and wetA are pivotal regulators of conidiophore development and conidium maturation. They act individually and together to regulate their own expression and that of numerous other sporulation-specific genes. BrlA, abaA and wetA act together to positively regulate the expression of the Pks1 gene cluster that mediates the biosynthesis of an anthraquinone derivative pigment that contributes to conidial pigmentation that provides protection from UV radiation, heat and cold stress. The protein is Developmental regulatory protein wetA of Metarhizium robertsii (strain ARSEF 23 / ATCC MYA-3075) (Metarhizium anisopliae (strain ARSEF 23)).